A 371-amino-acid chain; its full sequence is DNA primase large subunit PriL (371 aa).

The [4Fe-4S] cluster site is built by cysteine 230, cysteine 301, cysteine 310, and cysteine 317. A disordered region spans residues glutamate 337–lysine 371.

This sequence belongs to the eukaryotic-type primase large subunit family. In terms of assembly, heterodimer of a small subunit (PriS) and a large subunit (PriL). [4Fe-4S] cluster serves as cofactor.

Functionally, regulatory subunit of DNA primase, an RNA polymerase that catalyzes the synthesis of short RNA molecules used as primers for DNA polymerase during DNA replication. Stabilizes and modulates the activity of the small subunit, increasing the rate of DNA synthesis, and conferring RNA synthesis capability. The DNA polymerase activity may enable DNA primase to also catalyze primer extension after primer synthesis. May also play a role in DNA repair. The sequence is that of DNA primase large subunit PriL from Methanosarcina acetivorans (strain ATCC 35395 / DSM 2834 / JCM 12185 / C2A).